We begin with the raw amino-acid sequence, 340 residues long: Eukaryotic translation initiation factor 3 subunit I (340 aa).

WD repeat units lie at residues 8–47, 50–91, 150–189, 194–233, and 291–330; these read GHER…RLGT, GHQG…KVWD, CTES…QLEN, EFDH…ILKT, and GHFG…FDFM.

The protein belongs to the eIF-3 subunit I family. As to quaternary structure, component of the eukaryotic translation initiation factor 3 (eIF-3) complex.

It is found in the cytoplasm. Functionally, component of the eukaryotic translation initiation factor 3 (eIF-3) complex, which is involved in protein synthesis of a specialized repertoire of mRNAs and, together with other initiation factors, stimulates binding of mRNA and methionyl-tRNAi to the 40S ribosome. The eIF-3 complex specifically targets and initiates translation of a subset of mRNAs involved in cell proliferation. The polypeptide is Eukaryotic translation initiation factor 3 subunit I (tif34) (Neosartorya fischeri (strain ATCC 1020 / DSM 3700 / CBS 544.65 / FGSC A1164 / JCM 1740 / NRRL 181 / WB 181) (Aspergillus fischerianus)).